Here is a 99-residue protein sequence, read N- to C-terminus: Aspartyl/glutamyl-tRNA(Asn/Gln) amidotransferase subunit C (99 aa).

It belongs to the GatC family. As to quaternary structure, heterotrimer of A, B and C subunits.

The enzyme catalyses L-glutamyl-tRNA(Gln) + L-glutamine + ATP + H2O = L-glutaminyl-tRNA(Gln) + L-glutamate + ADP + phosphate + H(+). The catalysed reaction is L-aspartyl-tRNA(Asn) + L-glutamine + ATP + H2O = L-asparaginyl-tRNA(Asn) + L-glutamate + ADP + phosphate + 2 H(+). Allows the formation of correctly charged Asn-tRNA(Asn) or Gln-tRNA(Gln) through the transamidation of misacylated Asp-tRNA(Asn) or Glu-tRNA(Gln) in organisms which lack either or both of asparaginyl-tRNA or glutaminyl-tRNA synthetases. The reaction takes place in the presence of glutamine and ATP through an activated phospho-Asp-tRNA(Asn) or phospho-Glu-tRNA(Gln). The chain is Aspartyl/glutamyl-tRNA(Asn/Gln) amidotransferase subunit C from Paracidovorax citrulli (strain AAC00-1) (Acidovorax citrulli).